Consider the following 157-residue polypeptide: Transcription elongation factor GreA (157 aa).

Positions 25–43 (EGRAKVAEQLSEARDKGDL) are enriched in basic and acidic residues. Residues 25–47 (EGRAKVAEQLSEARDKGDLSENA) form a disordered region. Residues 43–79 (LSENAEYDAAKEAQEILERRIAKLEELMINARVINKD) adopt a coiled-coil conformation.

Belongs to the GreA/GreB family.

Functionally, necessary for efficient RNA polymerase transcription elongation past template-encoded arresting sites. The arresting sites in DNA have the property of trapping a certain fraction of elongating RNA polymerases that pass through, resulting in locked ternary complexes. Cleavage of the nascent transcript by cleavage factors such as GreA or GreB allows the resumption of elongation from the new 3'terminus. GreA releases sequences of 2 to 3 nucleotides. The sequence is that of Transcription elongation factor GreA from Amoebophilus asiaticus (strain 5a2).